The chain runs to 188 residues: UPF0398 protein BBR47_29830 (188 aa).

It belongs to the UPF0398 family.

In Brevibacillus brevis (strain 47 / JCM 6285 / NBRC 100599), this protein is UPF0398 protein BBR47_29830.